The following is a 227-amino-acid chain: Large ribosomal subunit protein uL3 (227 aa).

It belongs to the universal ribosomal protein uL3 family. Part of the 50S ribosomal subunit. Forms a cluster with proteins L14 and L19.

Functionally, one of the primary rRNA binding proteins, it binds directly near the 3'-end of the 23S rRNA, where it nucleates assembly of the 50S subunit. This chain is Large ribosomal subunit protein uL3, found in Persephonella marina (strain DSM 14350 / EX-H1).